The sequence spans 287 residues: Pantothenate synthetase (287 aa).

30–37 (MGNLHDGH) contacts ATP. Catalysis depends on H37, which acts as the Proton donor. Residue Q61 participates in (R)-pantoate binding. Position 61 (Q61) interacts with beta-alanine. 148 to 151 (GQKD) provides a ligand contact to ATP. Q154 serves as a coordination point for (R)-pantoate. Residues I177 and 185 to 188 (LSSR) contribute to the ATP site.

Belongs to the pantothenate synthetase family. As to quaternary structure, homodimer.

The protein localises to the cytoplasm. It carries out the reaction (R)-pantoate + beta-alanine + ATP = (R)-pantothenate + AMP + diphosphate + H(+). It participates in cofactor biosynthesis; (R)-pantothenate biosynthesis; (R)-pantothenate from (R)-pantoate and beta-alanine: step 1/1. Its function is as follows. Catalyzes the condensation of pantoate with beta-alanine in an ATP-dependent reaction via a pantoyl-adenylate intermediate. This chain is Pantothenate synthetase, found in Psychrobacter cryohalolentis (strain ATCC BAA-1226 / DSM 17306 / VKM B-2378 / K5).